Here is a 537-residue protein sequence, read N- to C-terminus: Chaperonin GroEL (537 aa).

Residues 29–32, 86–90, G413, and D492 each bind ATP; these read TLGP and DGTTT.

Belongs to the chaperonin (HSP60) family. In terms of assembly, forms a cylinder of 14 subunits composed of two heptameric rings stacked back-to-back. Interacts with the co-chaperonin GroES.

It localises to the cytoplasm. The catalysed reaction is ATP + H2O + a folded polypeptide = ADP + phosphate + an unfolded polypeptide.. Functionally, together with its co-chaperonin GroES, plays an essential role in assisting protein folding. The GroEL-GroES system forms a nano-cage that allows encapsulation of the non-native substrate proteins and provides a physical environment optimized to promote and accelerate protein folding. This Dehalococcoides mccartyi (strain ATCC BAA-2266 / KCTC 15142 / 195) (Dehalococcoides ethenogenes (strain 195)) protein is Chaperonin GroEL.